The primary structure comprises 942 residues: MASALNSKIHPPGTCASSKADARGGSGWRMDCDPEMHVKMCKKIAQLTKVIYALNTRQDEVEVSVESIREAHQEDLQDTGAETRTRLPQEQSRTSEDAETLLKRIQTLENALELQKRLTQEALAESASCKLETKERELRVEAEHAERVLILSKEMLELKADYEKRLQLLTSHEGPQWGQLSQESPDATAESSQRPEMHQVLLEVERLRAENKQLSQDYARKAEELQATYERENEAIRQAMQQSVSEALWQWQEKESGLRKNFQVQESALQAQVRKLEGDLEHRGRKISDLKKYAQKLKERIQDLDVQLREARQENSELKSTARKLGEKLAIAKDRLMLQECHVTQKTDDMKTEDGVLGKRDDLEACSLHPQQEQGFPKLCHCRNGGSETQTKKEASGEMENMKQQYEEDLRKVRHQTEEEKQQLREQLGKRLEDLVKKHTMEMKSVCSTVEVERKKLKEVEAQLEEVKTKSEREIQQLQEEKAALSTKLQNSLLEDPCSRPKKPARDEGLEKLTDEEESSSDEEERTGESVKGKSDLQPPFESVMKEKAVEIGHRPEDWQSQRTKLQTQAAECLNKDSTDSLQAHLLELQALEDNARQELQEDCEQMQVQQSGLLESLRQELTEQRVACCEHQKALEMLQNEFRAVGPLGKWQATNQCPGDRRDHTFITEDMGVTGPPGSLPCAAEKGLLEENAQLQDTVLRLRAEVDQHLQEALQLREQHRLLEEDQKAQRAMEVEALRQEHRKEMQAMVADFSGAQARLQARLAALETELKESGEKAGKGTSRPEDLQLIGRLQTRLKEREDIIRQLTEERRFHYAAFPSAVSHRNRSFSFNPHPGYLTPSMKKKKMEEVPSRVVSVPNLASYAKNFLSGDLSSRINAPPITKSPSLDPSPSCSQPYKPTQLLDGKTASRTQDGEPAQPKEAPQKQGSPHQEWFTKYFSF.

2 disordered regions span residues 1 to 26 and 73 to 97; these read MASA…RGGS and QEDL…TSED. 3 coiled-coil regions span residues 89–150, 196–337, and 387–495; these read QEQS…RVLI, EMHQ…DRLM, and SETQ…SLLE. Residues 486-542 are disordered; that stretch reads STKLQNSLLEDPCSRPKKPARDEGLEKLTDEEESSSDEEERTGESVKGKSDLQPPFE. A compositionally biased stretch (basic and acidic residues) spans 504-513; it reads PARDEGLEKL. Acidic residues predominate over residues 514-526; it reads TDEEESSSDEEER. 2 coiled-coil regions span residues 575 to 619 and 686 to 815; these read NKDS…ESLR and EKGL…ERRF. The interval 880 to 934 is disordered; that stretch reads APPITKSPSLDPSPSCSQPYKPTQLLDGKTASRTQDGEPAQPKEAPQKQGSPHQE. Residues 885 to 900 show a composition bias toward polar residues; that stretch reads KSPSLDPSPSCSQPYK.

The protein belongs to the FAM184 family.

The protein is Protein FAM184B (Fam184b) of Mus musculus (Mouse).